Reading from the N-terminus, the 704-residue chain is DNA ligase (704 aa).

NAD(+) contacts are provided by residues 58-62, 107-108, and Glu138; these read DYEYD and SL. Lys140 functions as the N6-AMP-lysine intermediate in the catalytic mechanism. NAD(+) contacts are provided by Arg161, Glu199, Lys323, and Lys347. Residues Cys441, Cys444, Cys459, and Cys464 each coordinate Zn(2+). One can recognise a BRCT domain in the interval 621-704; it reads EKKGKLAGLN…LKLIGGENTE (84 aa).

It belongs to the NAD-dependent DNA ligase family. LigA subfamily. Mg(2+) serves as cofactor. Requires Mn(2+) as cofactor.

The catalysed reaction is NAD(+) + (deoxyribonucleotide)n-3'-hydroxyl + 5'-phospho-(deoxyribonucleotide)m = (deoxyribonucleotide)n+m + AMP + beta-nicotinamide D-nucleotide.. Functionally, DNA ligase that catalyzes the formation of phosphodiester linkages between 5'-phosphoryl and 3'-hydroxyl groups in double-stranded DNA using NAD as a coenzyme and as the energy source for the reaction. It is essential for DNA replication and repair of damaged DNA. In Sulfurihydrogenibium sp. (strain YO3AOP1), this protein is DNA ligase.